Reading from the N-terminus, the 760-residue chain is Catalase-peroxidase (760 aa).

Positions 1–22 (MSQGECPVKKVPNVAGSGTRNT) are disordered. The tryptophyl-tyrosyl-methioninium (Trp-Tyr) (with M-268) cross-link spans 93 to 242 (WHSAGTYRVT…LAAAHMGLIY (150 aa)). The active-site Proton acceptor is the His94. The segment at 206-226 (KGEGIMDGDQHKTDKSEPHTS) is disordered. Basic and acidic residues predominate over residues 213–226 (GDQHKTDKSEPHTS). A cross-link (tryptophyl-tyrosyl-methioninium (Tyr-Met) (with W-93)) is located at residues 242-268 (YVNPEGPEGIPDPVAAAHDIRTTFGRM). His283 is a binding site for heme b.

This sequence belongs to the peroxidase family. Peroxidase/catalase subfamily. As to quaternary structure, homodimer or homotetramer. Heme b is required as a cofactor. In terms of processing, formation of the three residue Trp-Tyr-Met cross-link is important for the catalase, but not the peroxidase activity of the enzyme.

Its subcellular location is the cytoplasm. It catalyses the reaction H2O2 + AH2 = A + 2 H2O. It carries out the reaction 2 H2O2 = O2 + 2 H2O. In terms of biological role, bifunctional enzyme with both catalase and broad-spectrum peroxidase activity. This chain is Catalase-peroxidase, found in Pyrenophora tritici-repentis (strain Pt-1C-BFP) (Wheat tan spot fungus).